The sequence spans 314 residues: DegV domain-containing protein XCC3382 (314 aa).

The 305-residue stretch at 3–307 folds into the DegV domain; it reads IGIVVDSACD…KGALAVAFAA (305 aa). Thr-63 and Ser-96 together coordinate hexadecanoate.

In terms of biological role, may bind long-chain fatty acids, such as palmitate, and may play a role in lipid transport or fatty acid metabolism. The chain is DegV domain-containing protein XCC3382 from Xanthomonas campestris pv. campestris (strain ATCC 33913 / DSM 3586 / NCPPB 528 / LMG 568 / P 25).